Reading from the N-terminus, the 789-residue chain is Trimethylamine-oxide aldolase (789 aa).

In the C-terminal section; belongs to the GcvT family.

It carries out the reaction trimethylamine N-oxide + H(+) = dimethylamine + formaldehyde. Functionally, catalyzes the conversion of trimethylamine N-oxide (TMAO) to dimethylamine (DMA) and formaldehyde. This chain is Trimethylamine-oxide aldolase, found in Ruegeria pomeroyi (strain ATCC 700808 / DSM 15171 / DSS-3) (Silicibacter pomeroyi).